The sequence spans 618 residues: Keratin, type I cytoskeletal 9 (618 aa).

The segment at 1-49 (MSFRQISSSFRSSSGSSCGGGGGRGASRGSMRSSFGRSSRAGGESRFGS) is disordered. The head stretch occupies residues 1 to 137 (MSFRQISSSF…GGEGSILNTN (137 aa)). Over residues 7–16 (SSSFRSSSGS) the composition is skewed to low complexity. 2 positions are modified to phosphoserine: S14 and S17. Positions 17 to 26 (SCGGGGGRGA) are enriched in gly residues. Residues 27–49 (SRGSMRSSFGRSSRAGGESRFGS) are compositionally biased toward low complexity. Positions 138-173 (EKVVMQNLNSRLASYMDKVQELEEDNANLEKQIQEW) are coil 1A. One can recognise an IF rod domain in the interval 138–450 (EKVVMQNLNS…KLLEGGQQDF (313 aa)). Positions 174–192 (YSRKGNRVFQKDYSHYYNT) are linker 1. Residues 193-284 (IEDLKDRIVD…KSHKEEMNQL (92 aa)) are coil 1B. A linker 12 region spans residues 285–307 (TGLNDGDVNVEINVAPSTDLTQV). The coil 2 stretch occupies residues 308-446 (LNDMREEYEH…ETYRKLLEGG (139 aa)). The interval 447–609 (QQDFESSGAG…GGGNTRPSQS (163 aa)) is tail. Residues 449-618 (DFESSGAGQI…SQSSQIPRLR (170 aa)) are disordered. Gly residues predominate over residues 456 to 603 (GQIGFGSGKG…GSGGSYGGGN (148 aa)). Residues 607–618 (SQSQSSQIPRLR) show a composition bias toward low complexity.

This sequence belongs to the intermediate filament family. Heterotetramer of two type I and two type II keratins. Expressed in the perinuclear ring of spermatid manchettes within testis and in keratinocytes of the suprabasal layer of footpad epidermis (at protein level).

In terms of biological role, may serve an important special function either in the mature palmar and plantar skin tissue or in the morphogenetic program of the formation of these tissues. Plays a role in keratin filament assembly. May be involved in spermatid nuclear shaping and sperm development. The protein is Keratin, type I cytoskeletal 9 (Krt9) of Rattus norvegicus (Rat).